The sequence spans 523 residues: ADP-ribosylation factor GTPase-activating protein 3 (523 aa).

The Arf-GAP domain occupies 10–126; the sequence is LAIFKRLRSV…IKTLATQATR (117 aa). Residues 25–48 form a C4-type zinc finger; that stretch reads CFDCGAKNPSWASISYGVFLCIDC. Residues 162–206 are disordered; the sequence is GAMQASAQPESASSTPWGLETTPEKHEGGPGQGPSVEGLNTPGKA. The segment covering 164–177 has biased composition (polar residues); it reads MQASAQPESASSTP. Phosphoserine is present on residues Ser-231 and Ser-241. Residues 248–269 are disordered; that stretch reads QAQAVDKRKEQEDLARGAPKEE. Phosphoserine is present on residues Ser-270, Ser-274, and Ser-331. The disordered stretch occupies residues 308–424; sequence GFGSCRSGIS…YEPIGSTDEA (117 aa). A compositionally biased stretch (polar residues) spans 314–332; that stretch reads SGISHSVTSDMQTIEQESP. Residues 348–361 are compositionally biased toward low complexity; it reads SYFSSSSKWSEQSS. Phosphoserine is present on Ser-377. Basic and acidic residues predominate over residues 385-396; the sequence is YWKKDSSRDPEP. Ser-435, Ser-458, Ser-460, Ser-462, Ser-464, and Ser-465 each carry phosphoserine.

Its subcellular location is the cytoplasm. It localises to the golgi apparatus membrane. GAP activity stimulated by phosphatidylinositol 4,5-bisphosphate (PIP2). In terms of biological role, GTPase-activating protein (GAP) for ADP ribosylation factor 1 (ARF1). Hydrolysis of ARF1-bound GTP may lead to dissociation of coatomer from Golgi-derived membranes to allow fusion with target membranes. This Mus musculus (Mouse) protein is ADP-ribosylation factor GTPase-activating protein 3 (Arfgap3).